The following is a 310-amino-acid chain: Syndecan-1 (310 aa).

The first 22 residues, 1–22 (MRRAALWLWLCALALSLQPALP), serve as a signal peptide directing secretion. At 23-254 (QIVATNLPPE…GLLDRKEVLG (232 aa)) the chain is on the extracellular side. Disordered regions lie at residues 27-100 (TNLP…EGPK) and 114-212 (LTAR…QDFT). Residues 32 to 42 (EDQDGSGDDSD) show a composition bias toward acidic residues. Residue serine 37 is glycosylated (O-linked (Xyl...) (chondroitin sulfate) serine). A glycan (N-linked (GlcNAc...) asparagine) is linked at asparagine 43. O-linked (Xyl...) (heparan sulfate) serine glycosylation is found at serine 45 and serine 47. The span at 55–75 (ITLSQQTPSTWKDTQLLTAIP) shows a compositional bias: polar residues. Positions 117–127 (REQEATPRPRE) are enriched in basic and acidic residues. Low complexity predominate over residues 128–151 (TTQLPTTHLASTTTATTAQEPATS). Residues 153–164 (PHRDMQPGHHET) are compositionally biased toward basic and acidic residues. 2 O-linked (Xyl...) (chondroitin sulfate) serine glycosylation sites follow: serine 206 and serine 216. The helical transmembrane segment at 255 to 275 (GVIAGGLVGLIFAVCLVGFML) threads the bilayer. Residues 276–310 (YRMKKKDEGSYSLEEPKQANGGAYQKPTKQEEFYA) lie on the Cytoplasmic side of the membrane. Residues 284–310 (GSYSLEEPKQANGGAYQKPTKQEEFYA) form a disordered region. Phosphoserine is present on serine 285.

It belongs to the syndecan proteoglycan family. In terms of assembly, interacts with CDCP1. Interacts (via C-terminus) with TIAM1 (via PDZ domain). Interacts with MDK. Shedding is enhanced by a number of factors such as heparanase, thrombin or EGF. Also by stress and wound healing. PMA-mediated shedding is inhibited by TIMP3. In terms of tissue distribution, detected in placenta (at protein level). Detected in fibroblasts (at protein level).

The protein resides in the membrane. The protein localises to the secreted. It is found in the extracellular exosome. In terms of biological role, cell surface proteoglycan that contains both heparan sulfate and chondroitin sulfate and that links the cytoskeleton to the interstitial matrix. Regulates exosome biogenesis in concert with SDCBP and PDCD6IP. Able to induce its own expression in dental mesenchymal cells and also in the neighboring dental epithelial cells via an MSX1-mediated pathway. The protein is Syndecan-1 of Homo sapiens (Human).